We begin with the raw amino-acid sequence, 445 residues long: Tubulin beta chain (445 aa).

Positions 1-4 (MREI) match the MREI motif motif. Residues Q11, E69, S138, G142, T143, G144, N204, and N226 each contribute to the GTP site. E69 provides a ligand contact to Mg(2+). Residues 421–445 (EYQQYQDATAEEEGEGEEEGDEEVA) form a disordered region. Over residues 429–445 (TAEEEGEGEEEGDEEVA) the composition is skewed to acidic residues. E438 bears the 5-glutamyl polyglutamate mark.

This sequence belongs to the tubulin family. In terms of assembly, dimer of alpha and beta chains. A typical microtubule is a hollow water-filled tube with an outer diameter of 25 nm and an inner diameter of 15 nM. Alpha-beta heterodimers associate head-to-tail to form protofilaments running lengthwise along the microtubule wall with the beta-tubulin subunit facing the microtubule plus end conferring a structural polarity. Microtubules usually have 13 protofilaments but different protofilament numbers can be found in some organisms and specialized cells. It depends on Mg(2+) as a cofactor. Some glutamate residues at the C-terminus are polyglycylated, resulting in polyglycine chains on the gamma-carboxyl group. Glycylation is mainly limited to tubulin incorporated into axonemes (cilia and flagella) whereas glutamylation is prevalent in neuronal cells, centrioles, axonemes, and the mitotic spindle. Both modifications can coexist on the same protein on adjacent residues, and lowering polyglycylation levels increases polyglutamylation, and reciprocally. The precise function of polyglycylation is still unclear. In terms of processing, some glutamate residues at the C-terminus are polyglutamylated, resulting in polyglutamate chains on the gamma-carboxyl group. Polyglutamylation plays a key role in microtubule severing by spastin (SPAST). SPAST preferentially recognizes and acts on microtubules decorated with short polyglutamate tails: severing activity by SPAST increases as the number of glutamates per tubulin rises from one to eight, but decreases beyond this glutamylation threshold. As to expression, brain.

The protein resides in the cytoplasm. Its subcellular location is the cytoskeleton. In terms of biological role, tubulin is the major constituent of microtubules, a cylinder consisting of laterally associated linear protofilaments composed of alpha- and beta-tubulin heterodimers. Microtubules grow by the addition of GTP-tubulin dimers to the microtubule end, where a stabilizing cap forms. Below the cap, tubulin dimers are in GDP-bound state, owing to GTPase activity of alpha-tubulin. The sequence is that of Tubulin beta chain from Pseudopleuronectes americanus (Winter flounder).